The sequence spans 476 residues: MSMGKVVQVIGPVVDVEFSLDTDLPDINNALTVDKGNDETVVLEVALELGDGVMRTISMESTDGLRRGMPVEDAGRAINVPVGKETLGRVFNVLGETIDGGEEFPADFRRDSIHRSAPKFEELNTSSEILETGIKVIDLLAPYVRGGKIGLFGGAGVGKTVLIQELIHNIAEEHGGISVFTGVGERTREGNDLYFEMKESGVLEKTAMVFGQMNESPGARMRVALTGLTIAEYFRDVEGQDVLLFIDNIFRFTQAGSEVSALLGRMPSAVGYQPTLATEMGQLQERITSTKKGSVTSIQAIYVPADDYTDPAPATTFAHLDATTNLDRKLTQQGIYPAVNPLESSSSALDPEIVGQEHYEVASEVQHVLQRYRELQDIISILGMDELSDDEKIIVARARRIQFFLSQNFHVAEAFTGQAGSYVPVKDTVSGFKAILAGDYDDVPEEAFRLVGNIDAALAKAKEMGYTQSEKAVDQD.

153–160 (GGAGVGKT) serves as a coordination point for ATP.

This sequence belongs to the ATPase alpha/beta chains family. F-type ATPases have 2 components, CF(1) - the catalytic core - and CF(0) - the membrane proton channel. CF(1) has five subunits: alpha(3), beta(3), gamma(1), delta(1), epsilon(1). CF(0) has three main subunits: a(1), b(2) and c(9-12). The alpha and beta chains form an alternating ring which encloses part of the gamma chain. CF(1) is attached to CF(0) by a central stalk formed by the gamma and epsilon chains, while a peripheral stalk is formed by the delta and b chains.

The protein localises to the cell membrane. It carries out the reaction ATP + H2O + 4 H(+)(in) = ADP + phosphate + 5 H(+)(out). Functionally, produces ATP from ADP in the presence of a proton gradient across the membrane. The catalytic sites are hosted primarily by the beta subunits. In Latilactobacillus sakei subsp. sakei (strain 23K) (Lactobacillus sakei subsp. sakei), this protein is ATP synthase subunit beta.